A 409-amino-acid chain; its full sequence is Nucleoprotein (409 aa).

Disordered stretches follow at residues 1–84 (MASG…KGGR) and 121–194 (ADTK…DSGD). Residues 15 to 31 (PVIKLGGPKPPKVGSSG) are compositionally biased toward low complexity. Positions 29-160 (SSGNASWFQA…GNFRWDFIPL (132 aa)) are RNA-binding. The 126-residue stretch at 31-156 (GNASWFQAIK…GGPDGNFRWD (126 aa)) folds into the CoV N NTD domain. Residues 70 to 84 (YWRRQARFKPGKGGR) show a composition bias toward basic residues. The segment covering 162 to 179 (RGRSGRSTAASSAAASRA) has biased composition (low complexity). Positions 180-192 (PSREGSRGRRSDS) are enriched in basic and acidic residues. Phosphoserine; by host occurs at positions 190 and 192. The CoV N CTD domain occupies 215-331 (TKAKADEMAH…QCVDGVGTRP (117 aa)). Residues 226–333 (RYCKRTIPPN…VDGVGTRPKD (108 aa)) form a dimerization region. Disulfide bonds link cysteine 281-cysteine 308 and cysteine 320-cysteine 323. The interval 327-396 (VGTRPKDDEP…QLEFYDEPKV (70 aa)) is disordered. Residues 358 to 367 (QRPKKEKKLK) show a composition bias toward basic residues. The segment covering 368–384 (KQDDEADKALTSDEERN) has biased composition (basic and acidic residues). Residue threonine 378 is modified to Phosphothreonine; by host. Serine 379 is modified (phosphoserine; by host).

Belongs to the gammacoronavirus nucleocapsid protein family. As to quaternary structure, homooligomer. Both monomeric and oligomeric forms interact with RNA. Interacts with protein M. Interacts with NSP3; this interaction serves to tether the genome to the newly translated replicase-transcriptase complex at a very early stage of infection. In terms of processing, ADP-ribosylated. The ADP-ribosylation is retained in the virion during infection. Phosphorylated on serine and threonine residues.

The protein resides in the virion. Its subcellular location is the host endoplasmic reticulum-Golgi intermediate compartment. It localises to the host Golgi apparatus. Functionally, packages the positive strand viral genome RNA into a helical ribonucleocapsid (RNP) and plays a fundamental role during virion assembly through its interactions with the viral genome and membrane protein M. Plays an important role in enhancing the efficiency of subgenomic viral RNA transcription as well as viral replication. This chain is Nucleoprotein, found in Gallus gallus (Chicken).